Here is a 508-residue protein sequence, read N- to C-terminus: Protection of telomeres protein tpz1 (508 aa).

Residues 2 to 223 are pot1-binding; it reads SNCLKHPWLE…ENTTHGIYLE (222 aa). Disordered stretches follow at residues 159-178, 235-269, and 282-358; these read QEASLSQQEKPNDNTSNSRD, VSETPEVKQEDNDEDLDAYSWSSSTDSAGEIPSLP, and PPPF…QSHR. Positions 327–347 are enriched in polar residues; sequence STEQLNSSLTIERSQSIQSTD. Residues 348 to 358 show a composition bias toward basic and acidic residues; that stretch reads SKQRVETQSHR. Residues 379–508 form a ccq1/poz1-binding region; sequence TIDDSTGKLL…KKIEEFRNKS (130 aa).

In terms of assembly, interacts with ccq1, pot1 and poz1.

It is found in the chromosome. Its subcellular location is the telomere. The protein resides in the nucleus. Functionally, telomeric DNA-binding protein that is required to protect the 3'-end telomeric overhang and involved in telomere length regulation. recruits poz1 and ccq1 to telomeres, regulating telomere length negatively and positively respectively. The sequence is that of Protection of telomeres protein tpz1 (tpz1) from Schizosaccharomyces pombe (strain 972 / ATCC 24843) (Fission yeast).